Consider the following 401-residue polypeptide: MTATPAWTIQKPTALLVLADGTVIEGKGIGATGTVQAEVCFNTALTGYQEILTDPSYLGQIVTFTFPHIGNIGANDEDIEDLTPAARHGAVGVIFKADITEPSNYRAAKHLDAWLKARGIIGLCGIDTRALTAWIRENGMPNAVIAHDPAGVFDVEALKAEAKAWSGLEGLDLAKVATSGQSYRWNEKPWVWNEGYSTLGETDAAYHVVALDYGVKRNILRLFAGLNCRVTVVPAQTSAEEVLALKPDGIFLSNGPGDPAATGEYAVPVIQDLLKTDIPVFGICLGHQMLALALGARTEKMHQGHHGANHPVKDHTTGKVEIVSMNHGFAVDANSLPQGVEQTHISLFDGTNCGLRVDGRPVFSVQHHPEASPGPQDSHYLFRRFLNLIREKKGEPALAER.

The tract at residues 1–203 is CPSase; sequence MTATPAWTIQ…EGYSTLGETD (203 aa). Residues serine 56, glycine 255, and glycine 257 each contribute to the L-glutamine site. The Glutamine amidotransferase type-1 domain maps to 207 to 395; sequence HVVALDYGVK…LNLIREKKGE (189 aa). Cysteine 284 acts as the Nucleophile in catalysis. L-glutamine-binding residues include leucine 285, glutamine 288, asparagine 326, glycine 328, and phenylalanine 329. Residues histidine 368 and glutamate 370 contribute to the active site.

Belongs to the CarA family. In terms of assembly, composed of two chains; the small (or glutamine) chain promotes the hydrolysis of glutamine to ammonia, which is used by the large (or ammonia) chain to synthesize carbamoyl phosphate. Tetramer of heterodimers (alpha,beta)4.

The enzyme catalyses hydrogencarbonate + L-glutamine + 2 ATP + H2O = carbamoyl phosphate + L-glutamate + 2 ADP + phosphate + 2 H(+). It carries out the reaction L-glutamine + H2O = L-glutamate + NH4(+). It participates in amino-acid biosynthesis; L-arginine biosynthesis; carbamoyl phosphate from bicarbonate: step 1/1. It functions in the pathway pyrimidine metabolism; UMP biosynthesis via de novo pathway; (S)-dihydroorotate from bicarbonate: step 1/3. Its function is as follows. Small subunit of the glutamine-dependent carbamoyl phosphate synthetase (CPSase). CPSase catalyzes the formation of carbamoyl phosphate from the ammonia moiety of glutamine, carbonate, and phosphate donated by ATP, constituting the first step of 2 biosynthetic pathways, one leading to arginine and/or urea and the other to pyrimidine nucleotides. The small subunit (glutamine amidotransferase) binds and cleaves glutamine to supply the large subunit with the substrate ammonia. The sequence is that of Carbamoyl phosphate synthase small chain from Rhizobium meliloti (strain 1021) (Ensifer meliloti).